Here is a 195-residue protein sequence, read N- to C-terminus: MSGAAMSYPRSPWRGALPPMAVYGQHWARWAVGVNSLTARLRAASSSFRVELLGQGRALPLRDEWRCLGLPRAAETLAREVLLICDEAPVVYAHTIVHPRSVAADWPFLRALGTQPLGHALFADPRVARGAFEFALLDGRHPLVKRAHAALGGTPPGAMARLPARRSVFRRGVSAMLVTEVFLPALAVFDPPPMM.

Substrate contacts are provided by R79, L117, and E180.

It belongs to the UbiC family.

The protein resides in the cytoplasm. It carries out the reaction chorismate = 4-hydroxybenzoate + pyruvate. The protein operates within cofactor biosynthesis; ubiquinone biosynthesis. Its function is as follows. Removes the pyruvyl group from chorismate, with concomitant aromatization of the ring, to provide 4-hydroxybenzoate (4HB) for the ubiquinone pathway. The chain is Probable chorismate pyruvate-lyase from Ralstonia nicotianae (strain ATCC BAA-1114 / GMI1000) (Ralstonia solanacearum).